The chain runs to 132 residues: Peptide methionine sulfoxide reductase MsrB (132 aa).

In terms of domain architecture, MsrB spans 8-130 (LDSWREELTE…NSASLKLVPR (123 aa)). Residues cysteine 47, cysteine 50, cysteine 96, and cysteine 99 each coordinate Zn(2+). Cysteine 119 acts as the Nucleophile in catalysis.

Belongs to the MsrB Met sulfoxide reductase family. It depends on Zn(2+) as a cofactor.

It carries out the reaction L-methionyl-[protein] + [thioredoxin]-disulfide + H2O = L-methionyl-(R)-S-oxide-[protein] + [thioredoxin]-dithiol. The sequence is that of Peptide methionine sulfoxide reductase MsrB from Pseudomonas aeruginosa (strain UCBPP-PA14).